The chain runs to 856 residues: DNA mismatch repair protein MutS (856 aa).

ATP is bound at residue G607–S614.

This sequence belongs to the DNA mismatch repair MutS family.

In terms of biological role, this protein is involved in the repair of mismatches in DNA. It is possible that it carries out the mismatch recognition step. This protein has a weak ATPase activity. The polypeptide is DNA mismatch repair protein MutS (Lactobacillus delbrueckii subsp. bulgaricus (strain ATCC 11842 / DSM 20081 / BCRC 10696 / JCM 1002 / NBRC 13953 / NCIMB 11778 / NCTC 12712 / WDCM 00102 / Lb 14)).